The following is a 181-amino-acid chain: Oligoribonuclease (181 aa).

Residues 8–171 form the Exonuclease domain; sequence LIWVDLEMTG…DDIHDSIAEL (164 aa). Y129 is an active-site residue.

The protein belongs to the oligoribonuclease family.

The protein localises to the cytoplasm. Functionally, 3'-to-5' exoribonuclease specific for small oligoribonucleotides. The sequence is that of Oligoribonuclease from Photobacterium profundum (strain SS9).